The following is a 620-amino-acid chain: MKKPVKNIKKQKAQNQTKNIKKQLKEEVNTGLIDGIFVYTEPLSILEFATKINKPVTVILKHYFNQGLLLNQNTLLTEEQMGELCLEFGFDFKKETSVTKENILETLLDTVDDEKHLKERPPIVTIMGHVDHGKTTLLDSIKNSNVVASEAGGITQAIGAYQITTKNNKKITFIDTPGHEAFTEMRSRGANVTDIVVLIVAADDGVMPQTEEAIDHAKLANVPIIVFINKIDKPGSDPNRVKTELMKYGLVAEEFGGDIPFIEGSAIKKINLDKLEDTIILISELENLKANPDRFASGVVLEAHLDKAKGPVASVLVQQGSLEIKDIMVVGTTFGSIKHIEDEFKHKVLKAEPSKPVVVYGLNQVPKAGDKFVVINDEKMAREISEAQLKKQQEEERRTKQAFTLDAIKQHIDEGELKNITLIIKADTQGSVEALKNSLSKINISGVKINIIRASVGAISLSDISLASTVRDGLVIVYGFNVRPDAIVRKKAEEDRIEIRLHNIIYKLIEELEDAAKGILDPEIKEVVLGQAQVRALFRHSAIGTIGGFYVVDGAITRNAKIRVIRNGVVVYDGEINSLQHQKQDAKEVKAGFEGALTIKNFNDIKEGDIFEAYKLEQVK.

One can recognise a tr-type G domain in the interval E119 to L288. A G1 region spans residues G128–T135. G128–T135 is a binding site for GTP. A G2 region spans residues G153 to A157. The interval D175–G178 is G3. GTP contacts are provided by residues D175–H179 and N229–D232. Residues N229–D232 form a G4 region. The G5 stretch occupies residues S265 to I267.

Belongs to the TRAFAC class translation factor GTPase superfamily. Classic translation factor GTPase family. IF-2 subfamily.

The protein resides in the cytoplasm. One of the essential components for the initiation of protein synthesis. Protects formylmethionyl-tRNA from spontaneous hydrolysis and promotes its binding to the 30S ribosomal subunits. Also involved in the hydrolysis of GTP during the formation of the 70S ribosomal complex. The chain is Translation initiation factor IF-2 from Mycoplasma capricolum subsp. capricolum (strain California kid / ATCC 27343 / NCTC 10154).